Reading from the N-terminus, the 479-residue chain is Wax ester synthase/diacylglycerol acyltransferase 2 (479 aa).

The Cytoplasmic segment spans residues 1 to 182; the sequence is MAIERQVTEA…VAPKKNKAKN (182 aa). His-144 acts as the Proton acceptor in catalysis. Residues 183–199 traverse the membrane as a helical segment; that stretch reads VCFSLVAWLWFIVRLMF. The Lumenal segment spans residues 200–479; it reads HTCVEVIKSI…PKKVFHASKV (280 aa). N-linked (GlcNAc...) asparagine glycosylation is present at Asn-253.

In the N-terminal section; belongs to the long-chain O-acyltransferase family. Mostly expressed in flowers and siliques and barely in roots and stems.

It localises to the cell membrane. The protein resides in the endoplasmic reticulum membrane. It carries out the reaction an acyl-CoA + a 1,2-diacyl-sn-glycerol = a triacyl-sn-glycerol + CoA. The enzyme catalyses a long chain fatty alcohol + a fatty acyl-CoA = a wax ester + CoA. Its pathway is glycerolipid metabolism; triacylglycerol biosynthesis. It participates in lipid metabolism. In terms of biological role, bifunctional wax ester synthase/diacylglycerol acyltransferase. Involved in cuticular wax biosynthesis. This chain is Wax ester synthase/diacylglycerol acyltransferase 2, found in Arabidopsis thaliana (Mouse-ear cress).